Consider the following 493-residue polypeptide: Acetyl-coenzyme A carboxylase carboxyl transferase subunit beta (493 aa).

A CoA carboxyltransferase N-terminal domain is found at 231–493 (LWVQCENCYG…FKLHAFFPLN (263 aa)). Residues cysteine 235, cysteine 238, cysteine 254, and cysteine 257 each coordinate Zn(2+). The C4-type zinc finger occupies 235–257 (CENCYGLNYKKFLKSKINLCEQC).

This sequence belongs to the AccD/PCCB family. As to quaternary structure, acetyl-CoA carboxylase is a heterohexamer composed of biotin carboxyl carrier protein, biotin carboxylase and 2 subunits each of ACCase subunit alpha and ACCase plastid-coded subunit beta (accD). Requires Zn(2+) as cofactor.

It localises to the plastid stroma. It carries out the reaction N(6)-carboxybiotinyl-L-lysyl-[protein] + acetyl-CoA = N(6)-biotinyl-L-lysyl-[protein] + malonyl-CoA. Its pathway is lipid metabolism; malonyl-CoA biosynthesis; malonyl-CoA from acetyl-CoA: step 1/1. Component of the acetyl coenzyme A carboxylase (ACC) complex. Biotin carboxylase (BC) catalyzes the carboxylation of biotin on its carrier protein (BCCP) and then the CO(2) group is transferred by the transcarboxylase to acetyl-CoA to form malonyl-CoA. In Epifagus virginiana (Beechdrops), this protein is Acetyl-coenzyme A carboxylase carboxyl transferase subunit beta.